Reading from the N-terminus, the 348-residue chain is Rhodopsin (348 aa).

Met1 is subject to N-acetylmethionine. Residues Met1 to Gln36 lie on the Extracellular side of the membrane. Asn2 and Asn15 each carry an N-linked (GlcNAc...) asparagine glycan. Residues Phe37–Val61 form a helical membrane-spanning segment. Residues Thr62 to Asn73 lie on the Cytoplasmic side of the membrane. A helical membrane pass occupies residues Tyr74–Tyr96. Residues Thr97–Cys110 lie on the Extracellular side of the membrane. Cys110 and Cys187 are oxidised to a cystine. The chain crosses the membrane as a helical span at residues Asp111–Ile133. The short motif at Glu134–Tyr136 is the 'Ionic lock' involved in activated form stabilization element. At Glu134 to His152 the chain is on the cytoplasmic side. A helical transmembrane segment spans residues Ala153 to Val173. Residues Gly174–Ser202 are Extracellular-facing. Glu201 serves as a coordination point for Zn(2+). The chain crosses the membrane as a helical span at residues Phe203–Gly224. Over Gln225–Arg252 the chain is Cytoplasmic. The helical transmembrane segment at Met253–Tyr274 threads the bilayer. At Ile275–Ile286 the chain is on the extracellular side. Residue Gln279 participates in Zn(2+) binding. A helical transmembrane segment spans residues Leu287 to Met308. Lys296 carries the N6-(retinylidene)lysine modification. Residues Leu309 to Ala348 lie on the Cytoplasmic side of the membrane. S-palmitoyl cysteine attachment occurs at residues Cys322 and Cys323. Positions Asp330–Ala348 are interaction with SAG. Phosphoserine is present on Ser334. Thr336 is modified (phosphothreonine). Position 338 is a phosphoserine (Ser338). Phosphothreonine is present on residues Thr340 and Thr342. At Ser343 the chain carries Phosphoserine.

Belongs to the G-protein coupled receptor 1 family. Opsin subfamily. Homodimer. May form a complex composed of RHO, GRK1 and RCVRN in a Ca(2+)-dependent manner; RCVRN prevents the interaction between GRK1 and RHO. Interacts with GRK1. Interacts (phosphorylated form) with SAG. Interacts with GNAT1. Interacts with GNAT3. SAG and G-proteins compete for a common binding site. Interacts with PRCD; the interaction promotes PRCD stability. Forms a complex with ASAP1 and ARF4. Forms a complex with ASAP1, RAB11A, Rabin8/RAB3IP, ARF4 and RAB11FIP3; the complex regulates Golgi-to-cilia rhodopsin/RHO transport in photoreceptors. Phosphorylated on some or all of the serine and threonine residues present in the C-terminal region. In terms of processing, contains one covalently linked retinal chromophore. Upon light absorption, the covalently bound 11-cis-retinal is converted to all-trans-retinal. After hydrolysis of the Schiff base and release of the covalently bound all-trans-retinal, active rhodopsin is regenerated by binding of a fresh molecule of 11-cis-retinal.

It is found in the membrane. The protein localises to the cell projection. The protein resides in the cilium. It localises to the photoreceptor outer segment. Functionally, photoreceptor required for image-forming vision at low light intensity. Required for photoreceptor cell viability after birth. Light-induced isomerization of 11-cis to all-trans retinal triggers a conformational change that activates signaling via G-proteins. Subsequent receptor phosphorylation mediates displacement of the bound G-protein alpha subunit by the arrestin SAG and terminates signaling. This Caluromys philander (Bare-tailed woolly opossum) protein is Rhodopsin (RHO).